We begin with the raw amino-acid sequence, 122 residues long: NADH-quinone oxidoreductase subunit A (122 aa).

The next 3 membrane-spanning stretches (helical) occupy residues 12–32 (IIIF…VNLI), 66–86 (LVAI…PWAI), and 91–111 (IGGL…VGFI).

The protein belongs to the complex I subunit 3 family. In terms of assembly, NDH-1 is composed of 14 different subunits. Subunits NuoA, H, J, K, L, M, N constitute the membrane sector of the complex.

Its subcellular location is the cell inner membrane. The enzyme catalyses a quinone + NADH + 5 H(+)(in) = a quinol + NAD(+) + 4 H(+)(out). Functionally, NDH-1 shuttles electrons from NADH, via FMN and iron-sulfur (Fe-S) centers, to quinones in the respiratory chain. The immediate electron acceptor for the enzyme in this species is believed to be ubiquinone. Couples the redox reaction to proton translocation (for every two electrons transferred, four hydrogen ions are translocated across the cytoplasmic membrane), and thus conserves the redox energy in a proton gradient. This chain is NADH-quinone oxidoreductase subunit A, found in Pelagibacter ubique (strain HTCC1062).